The primary structure comprises 1087 residues: Platelet-derived growth factor receptor alpha (1087 aa).

An N-terminal signal peptide occupies residues 1 to 23; that stretch reads MGTPPRTFLILGCFLTGPLLTLC. Over 24-528 the chain is Extracellular; it reads QLPLPTIVPN…PTLRSELTVA (505 aa). Ig-like C2-type domains follow at residues 26–104, 116–208, 213–312, 314–411, and 414–517; these read PLPT…YNHT, IYIY…IYIL, QLPV…VHDK, FIHL…SLLI, and PALI…LKLV. Asn44, Asn75, Asn88, and Asn102 each carry an N-linked (GlcNAc...) asparagine glycan. A disulfide bond links Cys49 and Cys99. 2 cysteine pairs are disulfide-bonded: Cys149/Cys189 and Cys235/Cys290. N-linked (GlcNAc...) asparagine glycosylation is found at Asn353, Asn359, Asn458, and Asn468. Cys435 and Cys501 are joined by a disulfide. The helical transmembrane segment at 529-549 threads the bilayer; sequence AAVLVLLVIVIISLIVLVIIW. Residues 550–1087 are Cytoplasmic-facing; that stretch reads KQKPRYEIRW…SSDLVEDSFL (538 aa). Phosphotyrosine; by autocatalysis occurs at positions 572 and 574. Positions 593-954 constitute a Protein kinase domain; sequence LVLGRILGSG…HLSEIVESLL (362 aa). ATP is bound by residues 599 to 607 and Lys627; that span reads LGSGAFGKV. 6 positions are modified to phosphotyrosine; by autocatalysis: Tyr720, Tyr731, Tyr742, Tyr754, Tyr762, and Tyr768. Residue Asp818 is the Proton acceptor of the active site. A phosphotyrosine; by autocatalysis mark is found at Tyr849 and Tyr988. Residues 1000–1011 show a composition bias toward basic and acidic residues; sequence KDRESGFDEQRL. Residues 1000-1059 are disordered; sequence KDRESGFDEQRLSADSGYITPLPDIDPVSEDELGKRNRHSSQTSEESAIETGSSSSTFIK. Residue Tyr1017 is modified to Phosphotyrosine; by autocatalysis. The segment covering 1039-1057 has biased composition (polar residues); it reads SSQTSEESAIETGSSSSTF.

It belongs to the protein kinase superfamily. Tyr protein kinase family. CSF-1/PDGF receptor subfamily. Interacts with homodimeric PDGFA, PDGFB and PDGFC, and with heterodimers formed by PDGFA and PDGFB. Monomer in the absence of bound ligand. Interaction with dimeric PDGFA, PDGFB and/or PDGFC leads to receptor dimerization, where both PDGFRA homodimers and heterodimers with PDGFRB are observed. In terms of processing, ubiquitinated, leading to its internalization and degradation. Autophosphorylated on tyrosine residues upon ligand binding. Autophosphorylation occurs in trans, i.e. one subunit of the dimeric receptor phosphorylates tyrosine residues on the other subunit.

It localises to the cell membrane. It is found in the cell projection. Its subcellular location is the cilium. The protein localises to the golgi apparatus. It carries out the reaction L-tyrosyl-[protein] + ATP = O-phospho-L-tyrosyl-[protein] + ADP + H(+). Present in an inactive conformation in the absence of bound ligand. Binding of PDGFA and/or PDGFB leads to dimerization and activation by autophosphorylation on tyrosine residues. Tyrosine-protein kinase that acts as a cell-surface receptor for PDGFA, PDGFB and PDGFC and plays an essential role in the regulation of embryonic development, cell proliferation, survival and chemotaxis. Depending on the context, promotes or inhibits cell proliferation and cell migration. Plays an important role in the differentiation of bone marrow-derived mesenchymal stem cells. Required for normal skeleton development. Required for normal development of the gastrointestinal tract. Plays a role in cell migration and chemotaxis in wound healing. Plays a role in platelet activation, secretion of agonists from platelet granules, and in thrombin-induced platelet aggregation. Binding of its cognate ligands - homodimeric PDGFA, homodimeric PDGFB, heterodimers formed by PDGFA and PDGFB or homodimeric PDGFC -leads to the activation of several signaling cascades; the response depends on the nature of the bound ligand and is modulated by the formation of heterodimers between PDGFRA and PDGFRB. Phosphorylates PIK3R1, PLCG1, and PTPN11. Activation of PLCG1 leads to the production of the cellular signaling molecules diacylglycerol and inositol 1,4,5-trisphosphate, mobilization of cytosolic Ca(2+) and the activation of protein kinase C. Phosphorylates PIK3R1, the regulatory subunit of phosphatidylinositol 3-kinase, and thereby mediates activation of the AKT1 signaling pathway. Mediates activation of HRAS and of the MAP kinases MAPK1/ERK2 and/or MAPK3/ERK1. Promotes activation of STAT family members STAT1, STAT3 and STAT5A and/or STAT5B. Receptor signaling is down-regulated by protein phosphatases that dephosphorylate the receptor and its down-stream effectors, and by rapid internalization of the activated receptor. The chain is Platelet-derived growth factor receptor alpha (PDGFRA) from Gallus gallus (Chicken).